The sequence spans 27 residues: Larval-specific very high density lipoprotein (27 aa).

As to quaternary structure, homodimer. Hemolymph.

The protein localises to the secreted. It localises to the extracellular space. In terms of biological role, unknown (it might play a role in lipid transport and/or storage protein metabolism during metamorphosis). This is Larval-specific very high density lipoprotein from Apis mellifera (Honeybee).